Reading from the N-terminus, the 355-residue chain is uncharacterized protein (355 aa).

This sequence belongs to the carbohydrate kinase PfkB family.

This is an uncharacterized protein from Dictyostelium discoideum (Social amoeba).